Reading from the N-terminus, the 135-residue chain is Transcription antitermination protein NusB (135 aa).

A disordered region spans residues 115–135; the sequence is ATPAESTGRGSAVDSIPGQPS.

Belongs to the NusB family.

Involved in transcription antitermination. Required for transcription of ribosomal RNA (rRNA) genes. Binds specifically to the boxA antiterminator sequence of the ribosomal RNA (rrn) operons. This Frankia casuarinae (strain DSM 45818 / CECT 9043 / HFP020203 / CcI3) protein is Transcription antitermination protein NusB.